The primary structure comprises 179 residues: Large ribosomal subunit protein uL6 (179 aa).

This sequence belongs to the universal ribosomal protein uL6 family. In terms of assembly, part of the 50S ribosomal subunit.

Its function is as follows. This protein binds to the 23S rRNA, and is important in its secondary structure. It is located near the subunit interface in the base of the L7/L12 stalk, and near the tRNA binding site of the peptidyltransferase center. This is Large ribosomal subunit protein uL6 from Trichodesmium erythraeum (strain IMS101).